A 244-amino-acid polypeptide reads, in one-letter code: RNA transcription, translation and transport factor protein (244 aa).

N6-acetyllysine is present on residues Lys-20, Lys-62, and Lys-98.

This sequence belongs to the RTRAF family. Homodimer. Interacts with FAM98A (via N- and C-terminus). Interacts with NIN; which may prevent phosphorylation of NIN. Interacts with POLR2A. Component of a tRNA-splicing ligase complex.

It localises to the nucleus. The protein localises to the cytoplasm. Its subcellular location is the cytosol. The protein resides in the perinuclear region. It is found in the cytoskeleton. It localises to the microtubule organizing center. The protein localises to the centrosome. In terms of biological role, RNA-binding protein involved in modulation of mRNA transcription by Polymerase II. Component of the tRNA-splicing ligase complex and is required for tRNA ligation. May be required for RNA transport. The polypeptide is RNA transcription, translation and transport factor protein (Mus musculus (Mouse)).